Consider the following 207-residue polypeptide: Protein-L-isoaspartate O-methyltransferase (207 aa).

Ser-56 is an active-site residue.

Belongs to the methyltransferase superfamily. L-isoaspartyl/D-aspartyl protein methyltransferase family.

The protein resides in the cytoplasm. The catalysed reaction is [protein]-L-isoaspartate + S-adenosyl-L-methionine = [protein]-L-isoaspartate alpha-methyl ester + S-adenosyl-L-homocysteine. Functionally, catalyzes the methyl esterification of L-isoaspartyl residues in peptides and proteins that result from spontaneous decomposition of normal L-aspartyl and L-asparaginyl residues. It plays a role in the repair and/or degradation of damaged proteins. The chain is Protein-L-isoaspartate O-methyltransferase from Pyrobaculum islandicum (strain DSM 4184 / JCM 9189 / GEO3).